A 407-amino-acid polypeptide reads, in one-letter code: Putative glycosyltransferase YtcC (407 aa).

It belongs to the glycosyltransferase group 1 family. Glycosyltransferase 4 subfamily.

This chain is Putative glycosyltransferase YtcC (ytcC), found in Bacillus subtilis (strain 168).